Reading from the N-terminus, the 132-residue chain is Nucleoid-associated protein EspR (132 aa).

The segment at residues 38 to 50 (ITMSAPYLSQLRS) is a DNA-binding region (H-T-H motif).

As to quaternary structure, homodimer. Binds DNA as a dimer of dimers.

The protein localises to the cytoplasm. Its subcellular location is the nucleoid. Its function is as follows. Virulence regulator that has both architectural and regulatory roles. Impacts cell wall functions and pathogenesis through regulation of multiple genes. In Mycobacterium tuberculosis (strain CDC 1551 / Oshkosh), this protein is Nucleoid-associated protein EspR.